The chain runs to 271 residues: Phycocyanobilin lyase subunit alpha (271 aa).

Belongs to the CpcE/RpcE/PecE family. As to quaternary structure, cpcE and CpcF associate to form a lyase.

In terms of biological role, required for the chromophorylation of the cpcA1 gene product. The polypeptide is Phycocyanobilin lyase subunit alpha (cpcE1) (Pseudanabaena tenuis (strain PCC 7409)).